We begin with the raw amino-acid sequence, 120 residues long: Large ribosomal subunit protein uL22 (120 aa).

Belongs to the universal ribosomal protein uL22 family. As to quaternary structure, part of the 50S ribosomal subunit.

Its function is as follows. This protein binds specifically to 23S rRNA; its binding is stimulated by other ribosomal proteins, e.g. L4, L17, and L20. It is important during the early stages of 50S assembly. It makes multiple contacts with different domains of the 23S rRNA in the assembled 50S subunit and ribosome. Functionally, the globular domain of the protein is located near the polypeptide exit tunnel on the outside of the subunit, while an extended beta-hairpin is found that lines the wall of the exit tunnel in the center of the 70S ribosome. The chain is Large ribosomal subunit protein uL22 from Crocosphaera subtropica (strain ATCC 51142 / BH68) (Cyanothece sp. (strain ATCC 51142)).